A 164-amino-acid chain; its full sequence is PTS system sorbose-specific EIIB component (164 aa).

The PTS EIIB type-4 domain occupies 1 to 164 (MIITLARVDD…AKIDEVFGKE (164 aa)). The Pros-phosphohistidine intermediate role is filled by His14. Position 14 is a phosphohistidine; by EIIA (His14).

The protein resides in the cytoplasm. The enzyme catalyses keto-L-sorbose(out) + N(pros)-phospho-L-histidyl-[protein] = L-sorbose 1-phosphate(in) + L-histidyl-[protein]. In terms of biological role, the phosphoenolpyruvate-dependent sugar phosphotransferase system (PTS), a major carbohydrate active transport system, catalyzes the phosphorylation of incoming sugar substrates concomitant with their translocation across the cell membrane. The enzyme II SorABCD PTS system is involved in L-sorbose transport. The polypeptide is PTS system sorbose-specific EIIB component (Lacticaseibacillus casei (Lactobacillus casei)).